A 159-amino-acid chain; its full sequence is MEKLSEKDKELIRGSWESLGKNKVPHGVVMFSRLFELDPELLTLFHYTTNCGSTQDCLSSPEFLEHVTKVMLVIDAAVSHLDDLPSLEDFLLNLGRKHQAVGVNTQSFAEVGESLLYMLQCSLGQAYTAPLRQAWLNLYSIVVAAMSQGWAKNGEDKAD.

The Globin domain maps to 3-151 (KLSEKDKELI…VVAAMSQGWA (149 aa)). The heme b site is built by H66 and H98.

This sequence belongs to the globin family. As to quaternary structure, monomer. Homodimers and homotetramers. Mainly monomeric but also detected as part of homodimers and homotetramers.

Its subcellular location is the cytoplasm. It is found in the cytosol. The protein resides in the mitochondrion matrix. It carries out the reaction Fe(III)-heme b-[protein] + nitric oxide + H2O = Fe(II)-heme b-[protein] + nitrite + 2 H(+). Monomeric globin with a bis-histidyl six-coordinate heme-iron atom through which it can bind dioxygen, carbon monoxide and nitric oxide. Could help transport oxygen and increase its availability to the metabolically active neuronal tissues, though its low quantity in tissues as well as its high affinity for dioxygen, which may limit its oxygen-releasing ability, argue against it. The ferrous/deoxygenated form exhibits a nitrite reductase activity and it could produce nitric oxide which in turn inhibits cellular respiration in response to hypoxia. In its ferrous/deoxygenated state, it may also exhibit GDI (Guanine nucleotide Dissociation Inhibitor) activity toward heterotrimeric G-alpha proteins, thereby regulating signal transduction to facilitate neuroprotective responses in the wake of hypoxia and associated oxidative stress. In Chaenocephalus aceratus (Blackfin icefish), this protein is Neuroglobin (ngb).